The primary structure comprises 312 residues: ADP-L-glycero-D-manno-heptose-6-epimerase (312 aa).

NADP(+)-binding positions include 10–11, 31–32, lysine 38, lysine 53, 75–79, and asparagine 92; these read FI, DN, and EGACS. The active-site Proton acceptor is the tyrosine 140. Lysine 144 is an NADP(+) binding site. Position 169 (asparagine 169) interacts with substrate. NADP(+) contacts are provided by valine 170 and lysine 178. Residue lysine 178 is the Proton acceptor of the active site. Residues serine 180, histidine 187, 201 to 204, arginine 209, and tyrosine 274 contribute to the substrate site; that span reads FAGS.

It belongs to the NAD(P)-dependent epimerase/dehydratase family. HldD subfamily. Homopentamer. NADP(+) serves as cofactor.

The enzyme catalyses ADP-D-glycero-beta-D-manno-heptose = ADP-L-glycero-beta-D-manno-heptose. The protein operates within nucleotide-sugar biosynthesis; ADP-L-glycero-beta-D-manno-heptose biosynthesis; ADP-L-glycero-beta-D-manno-heptose from D-glycero-beta-D-manno-heptose 7-phosphate: step 4/4. It participates in bacterial outer membrane biogenesis; LPS core biosynthesis. Functionally, catalyzes the interconversion between ADP-D-glycero-beta-D-manno-heptose and ADP-L-glycero-beta-D-manno-heptose via an epimerization at carbon 6 of the heptose. In Photorhabdus laumondii subsp. laumondii (strain DSM 15139 / CIP 105565 / TT01) (Photorhabdus luminescens subsp. laumondii), this protein is ADP-L-glycero-D-manno-heptose-6-epimerase.